The following is a 332-amino-acid chain: Isopentenyl-diphosphate delta-isomerase (332 aa).

6 to 7 is a substrate binding site; sequence RK. FMN-binding positions include 65–67, Ser95, and Asn123; that span reads AMT. Position 95 to 97 (95 to 97) interacts with substrate; the sequence is SGR. Gln157 lines the substrate pocket. Glu158 serves as a coordination point for Mg(2+). Residues Lys187, Thr217, 264–266, Ala285, and 285–286 each bind FMN; these read GVY and AR.

Belongs to the IPP isomerase type 2 family. Homooctamer. Dimer of tetramers. FMN serves as cofactor. NADPH is required as a cofactor. Requires Mg(2+) as cofactor.

The protein localises to the cytoplasm. It carries out the reaction isopentenyl diphosphate = dimethylallyl diphosphate. With respect to regulation, competitively inhibited by N,N-dimethyl-2-amino-1-ethyl diphosphate (NIPP) and isopentyl diphosphate. In terms of biological role, involved in the biosynthesis of isoprenoids. Catalyzes the 1,3-allylic rearrangement of the homoallylic substrate isopentenyl (IPP) to its allylic isomer, dimethylallyl diphosphate (DMAPP). This chain is Isopentenyl-diphosphate delta-isomerase, found in Thermus thermophilus (strain ATCC BAA-163 / DSM 7039 / HB27).